A 418-amino-acid chain; its full sequence is Gamma-glutamyl phosphate reductase (418 aa).

It belongs to the gamma-glutamyl phosphate reductase family.

It is found in the cytoplasm. It catalyses the reaction L-glutamate 5-semialdehyde + phosphate + NADP(+) = L-glutamyl 5-phosphate + NADPH + H(+). The protein operates within amino-acid biosynthesis; L-proline biosynthesis; L-glutamate 5-semialdehyde from L-glutamate: step 2/2. Functionally, catalyzes the NADPH-dependent reduction of L-glutamate 5-phosphate into L-glutamate 5-semialdehyde and phosphate. The product spontaneously undergoes cyclization to form 1-pyrroline-5-carboxylate. The chain is Gamma-glutamyl phosphate reductase from Marinobacter nauticus (strain ATCC 700491 / DSM 11845 / VT8) (Marinobacter aquaeolei).